A 626-amino-acid chain; its full sequence is ATP-dependent RNA helicase cyt-19, mitochondrial (626 aa).

The Q motif motif lies at 74–103 (ADLAALGVHENVVRAITHGMGYENMTEVQS). The 192-residue stretch at 106-297 (ISPALKGKDI…RSYIDKNNFE (192 aa)) folds into the Helicase ATP-binding domain. 119 to 126 (AKTGTGKT) serves as a coordination point for ATP. The short motif at 241 to 244 (DEAD) is the DEAD box element. The 165-residue stretch at 329 to 493 (AMLELIEKAL…CASVNAADSG (165 aa)) folds into the Helicase C-terminal domain. The disordered stretch occupies residues 569–626 (LRVETREHSMRPMGSGPGHRRDFNSRGPRRQSDDPFENALHRAQDLDRRPTRRQQASF). The tract at residues 578-626 (MRPMGSGPGHRRDFNSRGPRRQSDDPFENALHRAQDLDRRPTRRQQASF) is RNA-binding. A compositionally biased stretch (basic and acidic residues) spans 607-617 (ALHRAQDLDRR).

Belongs to the DEAD box helicase family.

It localises to the mitochondrion matrix. It catalyses the reaction ATP + H2O = ADP + phosphate + H(+). With respect to regulation, activated by exposed helices in a group I intron RNA. In terms of biological role, acts as an RNA chaperone to resolve non-native structures formed during RNA folding to promote mitochondrial group I, but also group II, intron splicing. Functions predominantly by disrupting accessible RNA secondary structure and depends on spontaneous openings in tightly packed RNAs to gain access to RNA helices. The protein is ATP-dependent RNA helicase cyt-19, mitochondrial of Neurospora crassa (strain ATCC 24698 / 74-OR23-1A / CBS 708.71 / DSM 1257 / FGSC 987).